Reading from the N-terminus, the 247-residue chain is NAD(P)H-quinone oxidoreductase subunit K (247 aa).

Positions 63, 64, 128, and 159 each coordinate [4Fe-4S] cluster.

This sequence belongs to the complex I 20 kDa subunit family. In terms of assembly, NDH-1 can be composed of about 15 different subunits; different subcomplexes with different compositions have been identified which probably have different functions. [4Fe-4S] cluster is required as a cofactor.

The protein resides in the cellular thylakoid membrane. The enzyme catalyses a plastoquinone + NADH + (n+1) H(+)(in) = a plastoquinol + NAD(+) + n H(+)(out). It catalyses the reaction a plastoquinone + NADPH + (n+1) H(+)(in) = a plastoquinol + NADP(+) + n H(+)(out). In terms of biological role, NDH-1 shuttles electrons from an unknown electron donor, via FMN and iron-sulfur (Fe-S) centers, to quinones in the respiratory and/or the photosynthetic chain. The immediate electron acceptor for the enzyme in this species is believed to be plastoquinone. Couples the redox reaction to proton translocation, and thus conserves the redox energy in a proton gradient. Cyanobacterial NDH-1 also plays a role in inorganic carbon-concentration. The chain is NAD(P)H-quinone oxidoreductase subunit K from Gloeothece citriformis (strain PCC 7424) (Cyanothece sp. (strain PCC 7424)).